We begin with the raw amino-acid sequence, 95 residues long: Defensin-A3 (95 aa).

The signal sequence occupies residues 1-19; sequence MRTLGLLLALLFLAAQTPA. A propeptide spanning residues 20–61 is cleaved from the precursor; that stretch reads QLMGEEAEEATGRPEATEAQEAAAALMAARAADRHVTDPEQQ. 3 cysteine pairs are disulfide-bonded: Cys66-Cys93, Cys68-Cys82, and Cys72-Cys92.

This sequence belongs to the alpha-defensin family. In terms of tissue distribution, highly expressed in spleen, and expressed at lower levels in intestin and lung.

It localises to the secreted. In terms of biological role, has antimicrobial activity. The chain is Defensin-A3 from Ornithorhynchus anatinus (Duckbill platypus).